Here is a 574-residue protein sequence, read N- to C-terminus: DNA mismatch repair protein MutL (574 aa).

The protein belongs to the DNA mismatch repair MutL/HexB family.

This protein is involved in the repair of mismatches in DNA. It is required for dam-dependent methyl-directed DNA mismatch repair. May act as a 'molecular matchmaker', a protein that promotes the formation of a stable complex between two or more DNA-binding proteins in an ATP-dependent manner without itself being part of a final effector complex. This is DNA mismatch repair protein MutL from Coxiella burnetii (strain Dugway 5J108-111).